A 68-amino-acid chain; its full sequence is DNA-directed RNA polymerase subunit omega (68 aa).

The protein belongs to the RNA polymerase subunit omega family. In terms of assembly, the RNAP catalytic core consists of 2 alpha, 1 beta, 1 beta' and 1 omega subunit. When a sigma factor is associated with the core the holoenzyme is formed, which can initiate transcription.

The enzyme catalyses RNA(n) + a ribonucleoside 5'-triphosphate = RNA(n+1) + diphosphate. Functionally, promotes RNA polymerase assembly. Latches the N- and C-terminal regions of the beta' subunit thereby facilitating its interaction with the beta and alpha subunits. This is DNA-directed RNA polymerase subunit omega from Syntrophotalea carbinolica (strain DSM 2380 / NBRC 103641 / GraBd1) (Pelobacter carbinolicus).